Here is a 31-residue protein sequence, read N- to C-terminus: Sarcolipin (31 aa).

At 1 to 7 (MERSTRE) the chain is on the cytoplasmic side. The chain crosses the membrane as a helical span at residues 8–26 (LCLNFTVVLITVILIWLLV). The Lumenal segment spans residues 27 to 31 (RSYQY).

It belongs to the sarcolipin family. As to quaternary structure, homooligomer. Can also form heterooligomers with other sarcoplasmic/endoplasmic reticulum calcium ATPase (SERCA) regulators ARLN, ERLN, PLN and STRIT1/DWORF. Monomer. Interacts with calcium ATPase ATP2A1/SERCA1. Interacts as a monomer with ATP2A2/SERCA2; the interaction decreases ATP2A2 Ca(2+) affinity. Interacts with VMP1; VMP1 competes with PLN and SLN to prevent them from forming an inhibitory complex with ATP2A2. Skeletal muscle (at protein level).

The protein resides in the sarcoplasmic reticulum membrane. It is found in the endoplasmic reticulum membrane. Reversibly inhibits the activity of ATP2A1/SERCA1 and ATP2A2/SERCA2 in sarcoplasmic reticulum by decreasing the apparent affinity of the ATPase for Ca(2+). Also inhibits the activity of ATP2A3/SERCA3. Modulates calcium re-uptake during muscle relaxation and plays an important role in calcium homeostasis in muscle. Required for muscle-based, non-shivering thermogenesis. The polypeptide is Sarcolipin (SLN) (Oryctolagus cuniculus (Rabbit)).